Consider the following 89-residue polypeptide: Large ribosomal subunit protein bL31B (89 aa).

The protein belongs to the bacterial ribosomal protein bL31 family. Type B subfamily. In terms of assembly, part of the 50S ribosomal subunit.

In Aeromonas salmonicida (strain A449), this protein is Large ribosomal subunit protein bL31B.